The following is a 444-amino-acid chain: N-succinylarginine dihydrolase (444 aa).

Substrate is bound by residues serine 19–serine 28, asparagine 110, and histidine 137–arginine 138. Residue glutamate 174 is part of the active site. Substrate is bound at residue arginine 214. Histidine 250 is an active-site residue. Substrate-binding residues include aspartate 252 and asparagine 362. Residue cysteine 368 is the Nucleophile of the active site.

Belongs to the succinylarginine dihydrolase family. Homodimer.

It carries out the reaction N(2)-succinyl-L-arginine + 2 H2O + 2 H(+) = N(2)-succinyl-L-ornithine + 2 NH4(+) + CO2. Its pathway is amino-acid degradation; L-arginine degradation via AST pathway; L-glutamate and succinate from L-arginine: step 2/5. Its function is as follows. Catalyzes the hydrolysis of N(2)-succinylarginine into N(2)-succinylornithine, ammonia and CO(2). The chain is N-succinylarginine dihydrolase from Aliivibrio salmonicida (strain LFI1238) (Vibrio salmonicida (strain LFI1238)).